The chain runs to 249 residues: Metallo-beta-lactamase type 2 (249 aa).

An N-terminal signal peptide occupies residues 1-22 (MLKKIKISLILALGLTSLQAFG). Residues His98, His100, Asp102, His161, and Cys180 each contribute to the Zn(2+) site. Lys183 contributes to the substrate binding site. Residue His222 coordinates Zn(2+).

This sequence belongs to the metallo-beta-lactamase superfamily. Class-B beta-lactamase family. As to quaternary structure, monomer. It depends on Zn(2+) as a cofactor.

The protein resides in the periplasm. It catalyses the reaction a beta-lactam + H2O = a substituted beta-amino acid. Its activity is regulated as follows. Inhibited by chelating agents such as EDTA, 1-10 phenanthroline and pyridine-2,6-dicarboxylic acid. Functionally, confers resistance to the different beta-lactams antibiotics (penicillin, cephalosporin and carbapenem) via the hydrolysis of the beta-lactam ring. This Elizabethkingia meningoseptica (Chryseobacterium meningosepticum) protein is Metallo-beta-lactamase type 2 (blaB1).